The following is a 507-amino-acid chain: Glucose transporter type 3 (507 aa).

Residues 1-26 are disordered; it reads MRKGGIQDAEPVEPPQSSRKSGTWFA. Residues 1 to 53 lie on the Cytoplasmic side of the membrane; the sequence is MRKGGIQDAEPVEPPQSSRKSGTWFAKRPSEMPERHVERAPVRQKINNVGLYK. The chain crosses the membrane as a helical span at residues 54-74; that stretch reads ATLYSNIGSFFFGIAVGWSGT. The Extracellular portion of the chain corresponds to 75–95; it reads AERSVMEQHSYSFQPTELQWS. The chain crosses the membrane as a helical span at residues 96 to 116; the sequence is GVCILLTLGAALWCLPMGLMV. The Cytoplasmic segment spans residues 117–124; the sequence is RLLGCRRT. A helical transmembrane segment spans residues 125–145; it reads ILIQLLPNFLGWFLTVFARSV. Residues 146-152 lie on the Extracellular side of the membrane; sequence PMLYAGR. A helical transmembrane segment spans residues 153 to 173; it reads FFLGMCGGAHCVVVPIYNAEI. The Cytoplasmic portion of the chain corresponds to 174-183; that stretch reads STTKKRGAMG. A helical membrane pass occupies residues 184 to 204; the sequence is VVFEGACICGVIYSFAMSLFL. The Extracellular segment spans residues 205 to 207; the sequence is ELR. Residues 208–228 form a helical membrane-spanning segment; sequence IINFVNLGLLALGPLQILMPE. The Cytoplasmic portion of the chain corresponds to 229–293; the sequence is SPAYYVDHGN…YKKVRRSLAR (65 aa). A helical membrane pass occupies residues 294–314; the sequence is SLAIALLQKLCGALIFIFYGL. Topologically, residues 315 to 324 are extracellular; that stretch reads NMLDCLRIRR. The helical transmembrane segment at 325 to 345 threads the bilayer; sequence EFGLILCLGLILGFLACFFLV. The Cytoplasmic portion of the chain corresponds to 346–351; it reads DRLGRR. The helical transmembrane segment at 352–372 threads the bilayer; that stretch reads PLLIFSSAGIVFVSIYLGLHF. The Extracellular segment spans residues 373–374; the sequence is KV. A helical transmembrane segment spans residues 375–395; sequence WMTMGLTVMSWIALFCIAIFV. Residues 396–420 are Cytoplasmic-facing; sequence GCYTAGVGSLTWVLNAELLVRPMRP. The helical transmembrane segment at 421–441 threads the bilayer; it reads LGCSIVCAFNWLTAFFVICWF. The Extracellular segment spans residues 442-450; it reads GSHGVKCQP. Residues 451-471 form a helical membrane-spanning segment; it reads YLFLLFAIIASLILLFSLIYI. The Cytoplasmic portion of the chain corresponds to 472 to 507; sequence PETKKLSSAKIQQRLGGLINRPAVITFTSSSDSSNA.

This sequence belongs to the major facilitator superfamily. Sugar transporter (TC 2.A.1.1) family. Glucose transporter subfamily.

The protein resides in the cell membrane. The protein localises to the perikaryon. It is found in the cell projection. In terms of biological role, facilitative glucose transporter that can also mediate the uptake of various other monosaccharides across the cell membrane. The sequence is that of Glucose transporter type 3 (Glut3) from Drosophila melanogaster (Fruit fly).